The chain runs to 216 residues: Transmembrane emp24 domain-containing protein eca (216 aa).

Positions 1–20 are cleaved as a signal peptide; that stretch reads MRDQFISLALILCVLHSACG. Residues 21–182 are Lumenal-facing; sequence LYFHISETER…FRHTSESTNS (162 aa). In terms of domain architecture, GOLD spans 30 to 126; the sequence is RKCFIEEVPD…QLRVHLDIQV (97 aa). Residues 134-164 are a coiled coil; that stretch reads AHVAQKEKLTELQLRIRQLLDQVEQITKEQN. The helical transmembrane segment at 183 to 203 threads the bilayer; that stretch reads RVLWWSLAQTVVLVCMGFWQM. Residues 204 to 216 lie on the Cytoplasmic side of the membrane; sequence RHLKSFFEAKKLV. The Prevents secretion from ER motif lies at 213-216; sequence KKLV.

It belongs to the EMP24/GP25L family.

Its subcellular location is the endoplasmic reticulum membrane. In terms of biological role, eca and bai are essential, though not redundant, for dorsoventral patterning of the embryo. Specifically required during early embryogenesis for the activity of maternal tkv, while the zygotic tkv is not affected. Involved in Golgi organization. The protein is Transmembrane emp24 domain-containing protein eca of Drosophila melanogaster (Fruit fly).